We begin with the raw amino-acid sequence, 548 residues long: Methyl-accepting chemotaxis protein HlyB (548 aa).

Residues 1 to 10 (MIINKFSLKW) lie on the Cytoplasmic side of the membrane. The helical transmembrane segment at 11–31 (MLAIAVAIPAIALLFVAFTSL) threads the bilayer. At 32–199 (NTMSVMQAQS…SFEAGRTKQM (168 aa)) the chain is on the periplasmic side. Residues 200-220 (VIIAAGLIISFITSLVIITNL) traverse the membrane as a helical segment. Residues 218-271 (TNLRSRVAYLKDRMSSAAANLSLRTRLELDGNDELCDIGKSFNAFIDKVHHSIE) enclose the HAMP domain. Residues 221–548 (RSRVAYLKDR…LDKLVGSFEL (328 aa)) lie on the Cytoplasmic side of the membrane. One can recognise a Methyl-accepting transducer domain in the interval 276–512 (NSKELATMAS…DINRNVEDIN (237 aa)).

Belongs to the methyl-accepting chemotaxis (MCP) protein family.

It is found in the cell inner membrane. Its function is as follows. Chemotactic-signal transducers respond to changes in the concentration of attractants and repellents in the environment, transduce a signal from the outside to the inside of the cell, and facilitate sensory adaptation through the variation of the level of methylation. This chain is Methyl-accepting chemotaxis protein HlyB (hlyB), found in Vibrio cholerae serotype O1 (strain ATCC 39315 / El Tor Inaba N16961).